Consider the following 107-residue polypeptide: Translation initiation factor IF-1, chloroplastic (107 aa).

Positions 8–83 constitute an S1-like domain; the sequence is REKKNPREAK…SKGRIIYRLP (76 aa). Residues 81-107 are disordered; it reads RLPHKDSKRTEDSKDTEDLKDTKDSKD. The segment covering 83 to 107 has biased composition (basic and acidic residues); sequence PHKDSKRTEDSKDTEDLKDTKDSKD.

It belongs to the IF-1 family. As to quaternary structure, component of the 30S ribosomal translation pre-initiation complex which assembles on the 30S ribosome in the order IF-2 and IF-3, IF-1 and N-formylmethionyl-tRNA(fMet); mRNA recruitment can occur at any time during PIC assembly.

Its subcellular location is the plastid. It localises to the chloroplast. One of the essential components for the initiation of protein synthesis. Stabilizes the binding of IF-2 and IF-3 on the 30S subunit to which N-formylmethionyl-tRNA(fMet) subsequently binds. Helps modulate mRNA selection, yielding the 30S pre-initiation complex (PIC). Upon addition of the 50S ribosomal subunit IF-1, IF-2 and IF-3 are released leaving the mature 70S translation initiation complex. The chain is Translation initiation factor IF-1, chloroplastic from Saccharum hybrid (Sugarcane).